The sequence spans 365 residues: S-type anion channel SLAH4 (365 aa).

Topologically, residues 1–25 (MEIPSQEIHIMIDNTISRRKERKTN) are cytoplasmic. The chain crosses the membrane as a helical span at residues 26 to 46 (LADAEPIVLMSVLSSLHAGYF). At 47–73 (RISLSLCSQALLWKIMVHLHSELPSMA) the chain is on the extracellular side. The chain crosses the membrane as a helical span at residues 74 to 94 (YYLLWYLALATQVSLCFLYAF). Topologically, residues 95–106 (KCIFLFDMVKEE) are cytoplasmic. A helical membrane pass occupies residues 107 to 127 (FSHYIGVNYLYAPSISCLLLL). Residues 128–131 (QSAP) lie on the Extracellular side of the membrane. A helical membrane pass occupies residues 132-152 (MIEPHSVLYQTLFWIFAVPVL). The Cytoplasmic segment spans residues 153–168 (TLDTKLYGQWFTTEKR). The chain crosses the membrane as a helical span at residues 169–189 (FLSIMANPASQVSVIANLVAA). Residues 190–199 (RGAAEMGWKE) are Extracellular-facing. A helical transmembrane segment spans residues 200 to 220 (CALCLFSLGMVHYLVIFVTLY). Residues 221-235 (QRLPGGNNFPTTLRP) are Cytoplasmic-facing. A helical transmembrane segment spans residues 236 to 256 (VFFLFFAAPATASLAWNSICG). A topological domain (extracellular) is located at residue Asn257. Residues 258–278 (FDTIAKMLFFLSLFIFISLVC) traverse the membrane as a helical segment. Residues 279–291 (RPNLLKKSIKRFN) are Cytoplasmic-facing. A helical membrane pass occupies residues 292-312 (VAWWAYSFPITFLALNSVQYA). Over 313-321 (QEVKDHVAS) the chain is Extracellular. The chain crosses the membrane as a helical span at residues 322–342 (VLMFIFSSMSVLIFISVMLLT). The Cytoplasmic portion of the chain corresponds to 343-365 (AANSKRLLRRDHVLWSSTGPKDK).

This sequence belongs to the SLAC1 S-type anion channel family. Homotrimer.

It localises to the cell membrane. Slow, weak voltage-dependent S-type anion efflux channel involved in maintenance of anion homeostasis. This chain is S-type anion channel SLAH4 (SLAH4), found in Arabidopsis thaliana (Mouse-ear cress).